Reading from the N-terminus, the 647-residue chain is DNA mismatch repair protein MutL (647 aa).

The span at 387 to 400 (SAKPVHEATDEKAE) shows a compositional bias: basic and acidic residues. A disordered region spans residues 387–412 (SAKPVHEATDEKAEPQSTSVKFAERK).

It belongs to the DNA mismatch repair MutL/HexB family.

In terms of biological role, this protein is involved in the repair of mismatches in DNA. It is required for dam-dependent methyl-directed DNA mismatch repair. May act as a 'molecular matchmaker', a protein that promotes the formation of a stable complex between two or more DNA-binding proteins in an ATP-dependent manner without itself being part of a final effector complex. In Streptococcus sanguinis (strain SK36), this protein is DNA mismatch repair protein MutL.